Reading from the N-terminus, the 109-residue chain is Thioredoxin (109 aa).

The Thioredoxin domain occupies 2 to 109 (ETLLWKDARE…LVEKIKELFK (108 aa)). Cysteine 27 and cysteine 30 are oxidised to a cystine.

It belongs to the thioredoxin family.

Participates in various redox reactions through the reversible oxidation of its active center dithiol to a disulfide and catalyzes dithiol-disulfide exchange reactions. This Mycoplasmopsis pulmonis (strain UAB CTIP) (Mycoplasma pulmonis) protein is Thioredoxin (trxA).